Here is a 577-residue protein sequence, read N- to C-terminus: Steryl-sulfatase (577 aa).

The first 19 residues, 1–19, serve as a signal peptide directing secretion; sequence MLWPCLLALLLSQLNFLCA. Topologically, residues 21–183 are lumenal; the sequence is RPGPGPNFLL…GTVFGSAQQV (163 aa). The Ca(2+) site is built by aspartate 34 and aspartate 35. Asparagine 46 carries N-linked (GlcNAc...) asparagine glycosylation. Ca(2+) is bound at residue cysteine 74. Catalysis depends on cysteine 74, which acts as the Nucleophile. Position 74 is a 3-oxoalanine (Cys) (cysteine 74). Histidine 135 is an active-site residue. 2 cysteine pairs are disulfide-bonded: cysteine 140-cysteine 147 and cysteine 169-cysteine 241. The chain crosses the membrane as a helical span at residues 184 to 207; the sequence is FVVLPMNILGAVLLAMALARWAGL. Residues 208 to 211 are Cytoplasmic-facing; the sequence is ARPP. The chain crosses the membrane as a helical span at residues 212 to 233; the sequence is GWVFGVTVAAMAAVGGAYVAFL. Topologically, residues 234 to 577 are lumenal; sequence YHFRPANCFL…PLACRCAGDG (344 aa). Asparagine 332 is a glycosylation site (N-linked (GlcNAc...) asparagine). Residues aspartate 341 and histidine 342 each contribute to the Ca(2+) site. 3 disulfide bridges follow: cysteine 445-cysteine 488, cysteine 480-cysteine 486, and cysteine 561-cysteine 571. Asparagine 458 carries N-linked (GlcNAc...) asparagine glycosylation.

This sequence belongs to the sulfatase family. Homodimer. The cofactor is Ca(2+). In terms of processing, the conversion to 3-oxoalanine (also known as C-formylglycine, FGly), of a serine or cysteine residue in prokaryotes and of a cysteine residue in eukaryotes, is critical for catalytic activity.

Its subcellular location is the microsome membrane. It localises to the endoplasmic reticulum membrane. The catalysed reaction is dehydroepiandrosterone 3-sulfate + H2O = 3beta-hydroxyandrost-5-en-17-one + sulfate + H(+). It catalyses the reaction estrone 3-sulfate + H2O = estrone + sulfate + H(+). Catalyzes the conversion of sulfated steroid precursors, such as dehydroepiandrosterone sulfate (DHEA-S) and estrone sulfate to the free steroid. This chain is Steryl-sulfatase (Sts), found in Rattus norvegicus (Rat).